The primary structure comprises 234 residues: 1-(5-phosphoribosyl)-5-[(5-phosphoribosylamino)methylideneamino] imidazole-4-carboxamide isomerase (234 aa).

Asp8 serves as the catalytic Proton acceptor. Asp128 functions as the Proton donor in the catalytic mechanism.

This sequence belongs to the HisA/HisF family.

Its subcellular location is the cytoplasm. It carries out the reaction 1-(5-phospho-beta-D-ribosyl)-5-[(5-phospho-beta-D-ribosylamino)methylideneamino]imidazole-4-carboxamide = 5-[(5-phospho-1-deoxy-D-ribulos-1-ylimino)methylamino]-1-(5-phospho-beta-D-ribosyl)imidazole-4-carboxamide. Its pathway is amino-acid biosynthesis; L-histidine biosynthesis; L-histidine from 5-phospho-alpha-D-ribose 1-diphosphate: step 4/9. This is 1-(5-phosphoribosyl)-5-[(5-phosphoribosylamino)methylideneamino] imidazole-4-carboxamide isomerase from Cenarchaeum symbiosum (strain A).